The following is a 45-amino-acid chain: Photosystem II reaction center protein K (45 aa).

Residues 1 to 8 (MNSALFLA) constitute a propeptide that is removed on maturation. Residues 23–43 (ILPVIPVFFLLLAFVWQAAIG) traverse the membrane as a helical segment.

Belongs to the PsbK family. PSII is composed of 1 copy each of membrane proteins PsbA, PsbB, PsbC, PsbD, PsbE, PsbF, PsbH, PsbI, PsbJ, PsbK, PsbL, PsbM, PsbT, PsbX, PsbY, PsbZ, Psb30/Ycf12, at least 3 peripheral proteins of the oxygen-evolving complex and a large number of cofactors. It forms dimeric complexes.

It localises to the plastid. The protein resides in the chloroplast thylakoid membrane. Its function is as follows. One of the components of the core complex of photosystem II (PSII). PSII is a light-driven water:plastoquinone oxidoreductase that uses light energy to abstract electrons from H(2)O, generating O(2) and a proton gradient subsequently used for ATP formation. It consists of a core antenna complex that captures photons, and an electron transfer chain that converts photonic excitation into a charge separation. The chain is Photosystem II reaction center protein K from Porphyra purpurea (Red seaweed).